A 103-amino-acid chain; its full sequence is MSLNIAFFPAARTCSEPRKSTAAKPPLMCWPTATSGRAGSPGSGGGHNTRAGKVNGLCASVKFYHQWSVMSGKDNIESSVQFQALPIELWNKRTKTKITSNNG.

This is an uncharacterized protein from Saccharomyces cerevisiae (strain ATCC 204508 / S288c) (Baker's yeast).